We begin with the raw amino-acid sequence, 211 residues long: MGACGSKGSTSDKGLASDKDGKKAKDRKEAWERIRQAIPREKTAEAKQRRIELFKKFDKNETGKLCYDEVHSGCLEVLKLDEFTPRVRDITKRAFDKARALGSKLENKGSEDFVEFLEFRLMLCYIYDFFELTVMFDEIDASGNMLVDEEELKRAVPKLEAWGAKVEDPAALFKELDKNGTGSVTFDEFAAWASAVKLDADGDPDNVPESA.

Residues 1–29 (MGACGSKGSTSDKGLASDKDGKKAKDRKE) are disordered. Residues 15 to 29 (LASDKDGKKAKDRKE) show a composition bias toward basic and acidic residues. EF-hand domains lie at 45–80 (EAKQ…VLKL), 81–116 (DEFT…FVEF), 127–162 (YDFF…LEAW), and 164–199 (AKVE…VKLD). Positions 58, 60, 62, 64, and 69 each coordinate Ca(2+). The Ca(2+) site is built by Asp-140, Ser-142, Asn-144, Glu-151, Asp-177, Asn-179, Thr-181, Ser-183, and Glu-188.

This sequence belongs to the calflagin family.

The protein resides in the cell projection. It is found in the cilium. It localises to the flagellum. Functionally, may contribute to the rapid motility of the trypanosomes, playing a role either in flagellar structure or in calcium metabolism. Could alternate between a GDP-bound inactive form to a calcium/GTP-bound active form. This Trypanosoma cruzi protein is Flagellar calcium-binding protein (FCABP).